The sequence spans 274 residues: Large ribosomal subunit protein uL2 (274 aa).

Residues 224 to 259 (AMNPVDHPHGGGEGRTSGGRHPVTPWGIPTKGYKTR) are disordered.

Belongs to the universal ribosomal protein uL2 family. Part of the 50S ribosomal subunit. Forms a bridge to the 30S subunit in the 70S ribosome.

Functionally, one of the primary rRNA binding proteins. Required for association of the 30S and 50S subunits to form the 70S ribosome, for tRNA binding and peptide bond formation. It has been suggested to have peptidyltransferase activity; this is somewhat controversial. Makes several contacts with the 16S rRNA in the 70S ribosome. The polypeptide is Large ribosomal subunit protein uL2 (Geobacter sp. (strain M21)).